The chain runs to 77 residues: Conotoxin Mr8.2 (77 aa).

A signal peptide spans 1-16 (MLRLITAAVLVSACLA). A propeptide spanning residues 17 to 32 (YPQKKRTPPQTRPTSR) is cleaved from the precursor.

The protein belongs to the conotoxin B2 family. In terms of processing, contains 5 disulfide bonds. In terms of tissue distribution, expressed by the venom duct.

The protein resides in the secreted. In Conus marmoreus (Marble cone), this protein is Conotoxin Mr8.2.